We begin with the raw amino-acid sequence, 489 residues long: MFSLQDLCRKHLFILPDVFGEHVLQRLGLYWRCHGSLQRIGDDHILIRRDLILSTNEALRMAGEEGNNEVVKLLLLWKGNLHYAVIGALQGDQYDLIHKYENQIGDFHFILPLIQDANTFEKCHALERFCGVSCLLKHATKYNMLPILQKYQEELSMRAYLHETLFELACLWQRYDVLKWIEQTMHVYDLKIMFNIAISKRDLTMYSLGYIFLFDRGNTEATLLTQHLEKTAAKGLLHFVLETLKYGGNIDTVLTQAVKYNHRKLLDYFLRQLPRKHIEKLLLLAVQEKASKKTLNLLLSHLNYSVKRIKKLLRYVIEYESTLVIKILLKKRVNLIDAMLEKMVRYFSATKVRTIMDELSISPERVIKMAIQKMRTDIVIHTSYVWEDDLERLTRLKNMVYTIKYEHGKKMLIKVMHGIYKNLLYGEREKVMFHLAKLYVAQNAATQFRDICKDCYKLDVARFKPRFKQLILDCLEIVTKNLAIVSWKS.

This sequence belongs to the asfivirus MGF 505 family.

Plays a role in virus cell tropism, and may be required for efficient virus replication in macrophages. This is Protein MGF 505-2R from Ornithodoros (relapsing fever ticks).